The chain runs to 250 residues: Recombination protein RecR (250 aa).

The C4-type zinc-finger motif lies at 56 to 71 (CRICHNISQEDVCRIC). The Toprim domain occupies 79–227 (SIICVVEESK…TVTRLASGIP (149 aa)). Residues 148 to 172 (LGDADTPADGESSGADAAETGNAKT) form a disordered region.

The protein belongs to the RecR family.

May play a role in DNA repair. It seems to be involved in an RecBC-independent recombinational process of DNA repair. It may act with RecF and RecO. This is Recombination protein RecR from Corynebacterium jeikeium (strain K411).